Here is a 349-residue protein sequence, read N- to C-terminus: GMP reductase (349 aa).

108–131 (IDFLKIKKIFLLSSELKYICIDVA) contacts NADP(+). Residues glycine 181 and glycine 183 each contribute to the K(+) site. Cysteine 186 serves as the catalytic Thioimidate intermediate. NADP(+) is bound at residue 216 to 239 (IISDGGCTVSGDIAKAFGGGADFV).

This sequence belongs to the IMPDH/GMPR family. GuaC type 1 subfamily. As to quaternary structure, homotetramer.

The catalysed reaction is IMP + NH4(+) + NADP(+) = GMP + NADPH + 2 H(+). Catalyzes the irreversible NADPH-dependent deamination of GMP to IMP. It functions in the conversion of nucleobase, nucleoside and nucleotide derivatives of G to A nucleotides, and in maintaining the intracellular balance of A and G nucleotides. In Buchnera aphidicola subsp. Acyrthosiphon pisum (strain 5A), this protein is GMP reductase.